Reading from the N-terminus, the 118-residue chain is MARVKRGVIARKRHKKILKLAKGYYGARSRVFRVAKQAVIKAGQYAYRDRRQKKRQFRALWIARINAGARVNGLSYSRFIAGLKKASIEIDRKVLAELAVNEKAVFAAIVEKAKATLA.

This sequence belongs to the bacterial ribosomal protein bL20 family.

Binds directly to 23S ribosomal RNA and is necessary for the in vitro assembly process of the 50S ribosomal subunit. It is not involved in the protein synthesizing functions of that subunit. This chain is Large ribosomal subunit protein bL20, found in Pseudomonas fluorescens (strain SBW25).